The chain runs to 203 residues: Translation initiation factor IF-3 (203 aa).

Positions 172–182 (EAPKNEKKTKE) are enriched in basic and acidic residues. Residues 172–203 (EAPKNEKKTKENNPPFNRINLMKGENHAKNED) are disordered.

The protein belongs to the IF-3 family. As to quaternary structure, monomer.

The protein localises to the cytoplasm. Functionally, IF-3 binds to the 30S ribosomal subunit and shifts the equilibrium between 70S ribosomes and their 50S and 30S subunits in favor of the free subunits, thus enhancing the availability of 30S subunits on which protein synthesis initiation begins. In Helicobacter pylori (strain ATCC 700392 / 26695) (Campylobacter pylori), this protein is Translation initiation factor IF-3.